The primary structure comprises 392 residues: Probable tRNA sulfurtransferase (392 aa).

The 108-residue stretch at 59–166 folds into the THUMP domain; sequence SCYREALKRV…DEGLFIYTTE (108 aa). Residues 186-187, 211-212, arginine 269, glycine 290, and glutamine 299 each bind ATP; these read LL and YF.

It belongs to the ThiI family.

It is found in the cytoplasm. It catalyses the reaction [ThiI sulfur-carrier protein]-S-sulfanyl-L-cysteine + a uridine in tRNA + 2 reduced [2Fe-2S]-[ferredoxin] + ATP + H(+) = [ThiI sulfur-carrier protein]-L-cysteine + a 4-thiouridine in tRNA + 2 oxidized [2Fe-2S]-[ferredoxin] + AMP + diphosphate. It carries out the reaction [ThiS sulfur-carrier protein]-C-terminal Gly-Gly-AMP + S-sulfanyl-L-cysteinyl-[cysteine desulfurase] + AH2 = [ThiS sulfur-carrier protein]-C-terminal-Gly-aminoethanethioate + L-cysteinyl-[cysteine desulfurase] + A + AMP + 2 H(+). The protein operates within cofactor biosynthesis; thiamine diphosphate biosynthesis. In terms of biological role, catalyzes the ATP-dependent transfer of a sulfur to tRNA to produce 4-thiouridine in position 8 of tRNAs, which functions as a near-UV photosensor. Also catalyzes the transfer of sulfur to the sulfur carrier protein ThiS, forming ThiS-thiocarboxylate. This is a step in the synthesis of thiazole, in the thiamine biosynthesis pathway. The sulfur is donated as persulfide by IscS. The protein is Probable tRNA sulfurtransferase of Coxiella burnetii (strain RSA 493 / Nine Mile phase I).